Consider the following 901-residue polypeptide: HTH-type transcriptional regulator MalT (901 aa).

39 to 46 is an ATP binding site; sequence SPAGYGKT. Residues 829–894 form the HTH luxR-type domain; it reads ELIRTSPLTQ…AAVQHAQKLL (66 aa). Positions 853-872 form a DNA-binding region, H-T-H motif; the sequence is NEQIAGELEVAATTIKTHIR.

This sequence belongs to the MalT family. In terms of assembly, monomer in solution. Oligomerizes to an active state in the presence of the positive effectors ATP and maltotriose.

With respect to regulation, activated by ATP and maltotriose, which are both required for DNA binding. Functionally, positively regulates the transcription of the maltose regulon whose gene products are responsible for uptake and catabolism of malto-oligosaccharides. Specifically binds to the promoter region of its target genes, recognizing a short DNA motif called the MalT box. The protein is HTH-type transcriptional regulator MalT of Shigella flexneri serotype 5b (strain 8401).